The following is a 559-amino-acid chain: Potassium-transporting ATPase potassium-binding subunit (559 aa).

The next 12 helical transmembrane spans lie at 5–25 (GFLL…PLGV), 63–83 (LLAI…MLLG), 132–152 (GLTV…FALI), 170–190 (LVRI…LLFI), 250–270 (LTNM…CFAF), 283–303 (LLWA…SAEV), 329–349 (VLVS…AVIA), 356–376 (ALGG…FGGV), 379–399 (GLYG…LMIG), 416–436 (MTAL…ALAM), 484–504 (LLAF…MAIA), and 524–544 (GALF…LTFI).

It belongs to the KdpA family. As to quaternary structure, the system is composed of three essential subunits: KdpA, KdpB and KdpC.

The protein resides in the cell inner membrane. Functionally, part of the high-affinity ATP-driven potassium transport (or Kdp) system, which catalyzes the hydrolysis of ATP coupled with the electrogenic transport of potassium into the cytoplasm. This subunit binds the periplasmic potassium ions and delivers the ions to the membrane domain of KdpB through an intramembrane tunnel. This Citrobacter koseri (strain ATCC BAA-895 / CDC 4225-83 / SGSC4696) protein is Potassium-transporting ATPase potassium-binding subunit.